A 180-amino-acid polypeptide reads, in one-letter code: 6,7-dimethyl-8-ribityllumazine synthase (180 aa).

5-amino-6-(D-ribitylamino)uracil contacts are provided by residues Phe-23, 61–63 (SFE), and 85–87 (AVI). (2S)-2-hydroxy-3-oxobutyl phosphate is bound at residue 90 to 91 (QT). His-93 functions as the Proton donor in the catalytic mechanism. Phe-118 is a binding site for 5-amino-6-(D-ribitylamino)uracil. A (2S)-2-hydroxy-3-oxobutyl phosphate-binding site is contributed by Arg-132.

The protein belongs to the DMRL synthase family.

The catalysed reaction is (2S)-2-hydroxy-3-oxobutyl phosphate + 5-amino-6-(D-ribitylamino)uracil = 6,7-dimethyl-8-(1-D-ribityl)lumazine + phosphate + 2 H2O + H(+). The protein operates within cofactor biosynthesis; riboflavin biosynthesis; riboflavin from 2-hydroxy-3-oxobutyl phosphate and 5-amino-6-(D-ribitylamino)uracil: step 1/2. Catalyzes the formation of 6,7-dimethyl-8-ribityllumazine by condensation of 5-amino-6-(D-ribitylamino)uracil with 3,4-dihydroxy-2-butanone 4-phosphate. This is the penultimate step in the biosynthesis of riboflavin. The protein is 6,7-dimethyl-8-ribityllumazine synthase of Gloeobacter violaceus (strain ATCC 29082 / PCC 7421).